Reading from the N-terminus, the 605-residue chain is MSAEELVASPKLSKEEKKARKEAKKLKKAEKAAKEAAAQEGVATEEVKEEVRKKDKKDKKEKKDKKRKEVDQEEAESPSTSTAATEEPPKKKKKSKDADSSETPVSTATPTESETPALSKKQQKKLAKASAAAAATSSAAAIPAPTVPTTFTAEHNTFLTSNNITLTPSLFPPLLSIRDLPINSKLQPFLNKFEKPTPIQACSWPALLSKKDVVGIAETGSGKTLAFGVPGINLLSQLPPVTGSKKGRGQVPGQIQMLVLAPTRELAQQSHEHLSAFGEQVGLKSVCIFGGVGKDGQARELSQKDTRVVVGTPGRTLDLADSGELDLSSVSYLVLDEADRMLDAGFENDIRRIIAHTPGHKEGRQTVMFSATWPESVRRLASTFLNNPLRITVGSDELSANKRIEQIVEVLDNPRDKDFRLTHHLKAHLKVHPNSKTSPTRILVFALYKKEAQRLEYTIRRAGYAVGALHGDMTQEARFKALEAFKTGQQNVLVATDVAARGLDIPDVGLVINVTFPLTTEDFVHRCGRTGRAGKTGKAVTFFTGENHEKSLAGEFMRVLRDVGAEIPKEMDRFPTTIKKKEHGSYGAFYKETTNAPAPTKITFD.

The segment at 1-124 is disordered; it reads MSAEELVASP…TPALSKKQQK (124 aa). Over residues 54-66 the composition is skewed to basic residues; that stretch reads KDKKDKKEKKDKK. Positions 104-114 are enriched in polar residues; sequence PVSTATPTESE. The Q motif signature appears at 175-201; sequence LSIRDLPINSKLQPFLNKFEKPTPIQA. Residues 204–391 form the Helicase ATP-binding domain; the sequence is WPALLSKKDV…STFLNNPLRI (188 aa). 217 to 224 lines the ATP pocket; the sequence is AETGSGKT. Positions 336–339 match the DEAD box motif; the sequence is DEAD. The 152-residue stretch at 424-575 folds into the Helicase C-terminal domain; that stretch reads HLKAHLKVHP…EIPKEMDRFP (152 aa).

The protein belongs to the DEAD box helicase family. DDX5/DBP2 subfamily.

It localises to the nucleus. Its subcellular location is the nucleolus. The catalysed reaction is ATP + H2O = ADP + phosphate + H(+). In terms of biological role, ATP-dependent RNA helicase required for 60S ribosomal subunit synthesis. Involved in efficient pre-rRNA processing, predominantly at site A3, which is necessary for the normal formation of 25S and 5.8S rRNAs. This chain is ATP-dependent RNA helicase DBP3 (DBP3), found in Cryptococcus neoformans var. neoformans serotype D (strain JEC21 / ATCC MYA-565) (Filobasidiella neoformans).